The chain runs to 576 residues: F-actin capping regulator BSP1 (576 aa).

Residues 24-50 (RYSNIPSSKPAGEALSPVRSHNSGEYR) form a disordered region. Phosphoserine is present on residues serine 46, serine 79, and serine 88. 2 disordered regions span residues 132-160 (NDSNADKNLPSFEKGPRMPSRGRPRPREK) and 173-316 (GRAD…KRIP). The residue at position 185 (serine 185) is a Phosphoserine. Residues 191-206 (TRRDHIKITDGNEEKP) are compositionally biased toward basic and acidic residues. Serine 220 is modified (phosphoserine). Composition is skewed to polar residues over residues 243 to 255 (SRSTKPASFLSSL) and 264 to 279 (KSYNSEMETPKTTVKS). A compositionally biased stretch (pro residues) spans 304-313 (KPTPPSPPAK). Serine 309 and serine 320 each carry phosphoserine. Residues 408–470 (SIPEAIKGIQ…LSLRNNLKKR (63 aa)) are interaction with F-actin. The segment at 541–576 (DKYTTSRDETVKETKPLVHPNKNRTRGPRRKLPTRV) is disordered. Basic and acidic residues predominate over residues 544 to 556 (TTSRDETVKETKP). The interaction with the F-actin capping complex stretch occupies residues 547-576 (RDETVKETKPLVHPNKNRTRGPRRKLPTRV). The segment covering 561 to 576 (NKNRTRGPRRKLPTRV) has biased composition (basic residues).

As to quaternary structure, interacts (via C-terminus) with the CAP1-CAP2 F-actin capping protein complex. Interacts with INP52 (via SAC domain); the interaction is direct. Interacts with INP53 (via SAC domain); the interaction is direct. Interacts with RVS167. Interacts with SLA1. Post-translationally, phosphorylated by CDC28.

The protein resides in the cytoplasm. Its subcellular location is the cytoskeleton. The protein localises to the actin patch. It is found in the cell membrane. Recruits the capping protein complex to actin patches and the actomyosin contractile ring, and/or stabilizes their interaction. May serve as an adapter to link INP52 and INP53 to the cortical actin cytoskeleton. Binds F-actin. The chain is F-actin capping regulator BSP1 (BSP1) from Saccharomyces cerevisiae (strain ATCC 204508 / S288c) (Baker's yeast).